The primary structure comprises 187 residues: Adenine phosphoribosyltransferase (187 aa).

This sequence belongs to the purine/pyrimidine phosphoribosyltransferase family. In terms of assembly, homodimer.

Its subcellular location is the cytoplasm. The catalysed reaction is AMP + diphosphate = 5-phospho-alpha-D-ribose 1-diphosphate + adenine. Its pathway is purine metabolism; AMP biosynthesis via salvage pathway; AMP from adenine: step 1/1. Catalyzes a salvage reaction resulting in the formation of AMP, that is energically less costly than de novo synthesis. The sequence is that of Adenine phosphoribosyltransferase from Paracoccus denitrificans (strain Pd 1222).